A 565-amino-acid polypeptide reads, in one-letter code: Periplasmic trehalase (565 aa).

Positions 1-30 (MKSPAPSRPQKMALIPACIFLYFAALSVQA) are cleaved as a signal peptide. Residues R152, 159-160 (WD), N196, 205-207 (RSQ), 277-279 (RPE), and G310 each bind substrate. Catalysis depends on proton donor/acceptor residues D312 and E496. E511 is a binding site for substrate. The interval 540–565 (DNVPATHPTVKSATTQPSTKEAQPTP) is disordered. A compositionally biased stretch (polar residues) spans 548–565 (TVKSATTQPSTKEAQPTP).

It belongs to the glycosyl hydrolase 37 family. Monomer.

The protein localises to the periplasm. It catalyses the reaction alpha,alpha-trehalose + H2O = alpha-D-glucose + beta-D-glucose. Provides the cells with the ability to utilize trehalose at high osmolarity by splitting it into glucose molecules that can subsequently be taken up by the phosphotransferase-mediated uptake system. This Shigella flexneri serotype 5b (strain 8401) protein is Periplasmic trehalase.